Consider the following 58-residue polypeptide: ComX pheromone (58 aa).

Residues 1-52 (MKQDMIDYLMKNPQVLTKLENGEASLIGIPDKLIPSIVDIFNKKMTLSKKCK) constitute a propeptide that is removed on maturation. Trp56 is lipidated: 3'-geranyl-2',N2-cyclotryptophan; in strain RO-E-2 /NRRL B-23055.

In terms of assembly, interacts directly with the sensor histidine kinase ComP and stimulates its activity. Post-translationally, trp-56 is modified by geranylation, which is essential for activity. Modified by the tryptophan prenyltransferase ComQ before export to the extracellular environment. The type of isoprenyl derivative differs among the different pherotypes and depends on ComX primary sequence.

It is found in the secreted. Its function is as follows. Part of a major quorum-sensing system that regulates the development of genetic competence. Acts through the activation of the two-component regulatory system ComP/ComA composed of a sensor histidine kinase, ComP, and a response regulator, ComA. This is ComX pheromone from Bacillus spizizenii (Bacillus subtilis subsp. spizizenii).